The chain runs to 294 residues: Diaminopimelate epimerase (294 aa).

Residues N15, Q47, and N67 each contribute to the substrate site. C76 serves as the catalytic Proton donor. Substrate-binding positions include 77-78, N163, N197, and 215-216; these read GN and ER. Catalysis depends on C224, which acts as the Proton acceptor. Substrate is bound at residue 225–226; the sequence is GS.

The protein belongs to the diaminopimelate epimerase family. In terms of assembly, homodimer.

Its subcellular location is the cytoplasm. The enzyme catalyses (2S,6S)-2,6-diaminopimelate = meso-2,6-diaminopimelate. It functions in the pathway amino-acid biosynthesis; L-lysine biosynthesis via DAP pathway; DL-2,6-diaminopimelate from LL-2,6-diaminopimelate: step 1/1. Its function is as follows. Catalyzes the stereoinversion of LL-2,6-diaminopimelate (L,L-DAP) to meso-diaminopimelate (meso-DAP), a precursor of L-lysine and an essential component of the bacterial peptidoglycan. The polypeptide is Diaminopimelate epimerase (Mesorhizobium japonicum (strain LMG 29417 / CECT 9101 / MAFF 303099) (Mesorhizobium loti (strain MAFF 303099))).